We begin with the raw amino-acid sequence, 329 residues long: Phosphate acyltransferase (329 aa).

The protein belongs to the PlsX family. As to quaternary structure, homodimer. Probably interacts with PlsY.

It localises to the cytoplasm. It catalyses the reaction a fatty acyl-[ACP] + phosphate = an acyl phosphate + holo-[ACP]. The protein operates within lipid metabolism; phospholipid metabolism. Functionally, catalyzes the reversible formation of acyl-phosphate (acyl-PO(4)) from acyl-[acyl-carrier-protein] (acyl-ACP). This enzyme utilizes acyl-ACP as fatty acyl donor, but not acyl-CoA. This chain is Phosphate acyltransferase, found in Shouchella clausii (strain KSM-K16) (Alkalihalobacillus clausii).